The primary structure comprises 864 residues: Leucine--tRNA ligase (864 aa).

Residues 42–52 (PYPSGKLHMGH) carry the 'HIGH' region motif. Positions 624–628 (KMSKS) match the 'KMSKS' region motif. Lysine 627 contributes to the ATP binding site.

Belongs to the class-I aminoacyl-tRNA synthetase family.

Its subcellular location is the cytoplasm. It catalyses the reaction tRNA(Leu) + L-leucine + ATP = L-leucyl-tRNA(Leu) + AMP + diphosphate. The protein is Leucine--tRNA ligase of Burkholderia cenocepacia (strain HI2424).